The sequence spans 760 residues: Leucine-rich repeat extensin-like protein 3 (760 aa).

The signal sequence occupies residues 1–20 (MKKTIQILLFFFFLINLTNA). The N-linked (GlcNAc...) asparagine glycan is linked to N16. The stretch at 21–45 (LSISSDGGVLSDNEVRHIQRRQLLE) is one LRR 1 repeat. N-linked (GlcNAc...) asparagine glycans are attached at residues N86 and N98. LRR repeat units follow at residues 113–137 (IRTV…LGLL), 138–160 (SDLA…RFNR), 161–185 (LKLL…VLQL), 186–209 (PSLK…LFSK), 211–232 (LDAI…FGDS), 234–255 (VSVI…LVEM), 256–279 (KNLN…IGRL), 281–303 (NVTV…VGEM), and 304–327 (VSVE…ICQL). A glycan (N-linked (GlcNAc...) asparagine) is linked at N281. The N-linked (GlcNAc...) asparagine glycan is linked to N332. Disordered stretches follow at residues 389–502 (GRSV…PPPP), 515–610 (PPVY…YSPP), and 663–748 (PPPP…PVIG). 2 stretches are compositionally biased toward pro residues: residues 394 to 415 (PRPP…PPAP) and 423 to 502 (LTSP…PPPP). Residues 409 to 758 (SPPPPAPIFS…VSYASPPPPP (350 aa)) form a contains the Ser-Pro(4) repeats region. Residues 663–745 (PPPPVHYSSP…SPEYEGPLPP (83 aa)) are compositionally biased toward pro residues.

Interacts with SH3P1. Post-translationally, hydroxylated on proline residues in the S-P-P-P-P repeat. In terms of processing, O-glycosylated on hydroxyprolines. Expressed in roots, stems, leaves and flowers, mostly in vascular tissues.

The protein resides in the secreted. Its subcellular location is the cell wall. Functionally, modulates cell morphogenesis by regulating cell wall formation and assembly, and/or growth polarization. The sequence is that of Leucine-rich repeat extensin-like protein 3 (LRX3) from Arabidopsis thaliana (Mouse-ear cress).